A 521-amino-acid chain; its full sequence is Cytochrome P450 monooxygenase sdnF (521 aa).

A helical transmembrane segment spans residues 19 to 39; that stretch reads YLGLLLSGTVLYTVYKLIIAI. 5 N-linked (GlcNAc...) asparagine glycosylation sites follow: Asn-178, Asn-186, Asn-191, Asn-309, and Asn-416. Cys-460 is a heme binding site.

Belongs to the cytochrome P450 family. Heme serves as cofactor.

It is found in the membrane. Its pathway is antibiotic biosynthesis. Cytochrome P450 monooxygenase; part of the gene cluster that mediates the biosynthesis of sordarin and hypoxysordarin, glycoside antibiotics with a unique tetracyclic diterpene aglycone structure. First, the geranylgeranyl diphosphate synthase sdnC constructs GGDP from farnesyl diphosphate and isopentenyl diphosphate. The diterpene cyclase sdnA then catalyzes the cyclization of GGDP to afford cycloaraneosene. Cycloaraneosene is then hydroxylated four times by the putative cytochrome P450 monooxygenases sdnB, sdnE, sdnF and sdnH to give a hydroxylated cycloaraneosene derivative such as cycloaraneosene-8,9,13,19-tetraol. Although the order of the hydroxylations is unclear, at least C8, C9 and C13 of the cycloaraneosene skeleton are hydroxylated before the sordaricin formation. Dehydration of the 13-hydroxy group of the hydroxylated cycloaraneosene derivative might be catalyzed by an unassigned hypothetical protein such as sdnG and sdnP to construct the cyclopentadiene moiety. The FAD-dependent oxidoreductase sdnN is proposed to catalyze the oxidation at C9 of the hydroxylated cycloaraneosene derivative and also catalyze the Baeyer-Villiger oxidation to give the lactone intermediate. The presumed lactone intermediate would be hydrolyzed to give an acrolein moiety and a carboxylate moiety. Then, [4+2]cycloaddition would occur between the acrolein moiety and the cyclopentadiene moiety to give sordaricin. SdnN might also be involved in the [4+2]cycloaddition after the hypothesized oxidation to accommodate the oxidized product and prompt the [4+2]cycloaddition. GDP-6-deoxy-D-altrose may be biosynthesized from GDP-D-mannose by the putative GDP-mannose-4,6-dehydratase sdnI and the short-chain dehydrogenase sdnK. The glycosyltransferase sdnJ catalyzes the attachment of 6-deoxy-D-altrose onto the 19-hydroxy group of sordaricin to give 4'-O-demethylsordarin. The methyltransferase sdnD would complete the biosynthesis of sordarin. Sordarin can be further modified into hypoxysordarin. The unique acyl chain at the 3'-hydroxy group of hypoxysordarin would be constructed by an iterative type I PKS sdnO and the trans-acting polyketide methyltransferase sdnL. SdnL would be responsible for the introduction of an alpha-methyl group of the polyketide chain. Alternatively, the beta-lactamase-like protein sdnR might be responsible for the cleavage and transfer of the polyketide chain from the PKS sdnO to sordarin. Two putative cytochrome P450 monooxygenases, sdnQ and sdnT, might catalyze the epoxidations of the polyketide chain to complete the biosynthesis of hypoxysordarin. Transcriptional regulators sdnM and sdnS are presumably encoded for the transcriptional regulation of the expression of the sdn gene cluster. This chain is Cytochrome P450 monooxygenase sdnF, found in Sordaria araneosa (Pleurage araneosa).